A 102-amino-acid chain; its full sequence is Large ribosomal subunit protein bL21 (102 aa).

This sequence belongs to the bacterial ribosomal protein bL21 family. As to quaternary structure, part of the 50S ribosomal subunit. Contacts protein L20.

Its function is as follows. This protein binds to 23S rRNA in the presence of protein L20. This chain is Large ribosomal subunit protein bL21, found in Sulfurimonas denitrificans (strain ATCC 33889 / DSM 1251) (Thiomicrospira denitrificans (strain ATCC 33889 / DSM 1251)).